We begin with the raw amino-acid sequence, 236 residues long: Phosphoribosylaminoimidazole-succinocarboxamide synthase (236 aa).

Belongs to the SAICAR synthetase family.

It catalyses the reaction 5-amino-1-(5-phospho-D-ribosyl)imidazole-4-carboxylate + L-aspartate + ATP = (2S)-2-[5-amino-1-(5-phospho-beta-D-ribosyl)imidazole-4-carboxamido]succinate + ADP + phosphate + 2 H(+). It participates in purine metabolism; IMP biosynthesis via de novo pathway; 5-amino-1-(5-phospho-D-ribosyl)imidazole-4-carboxamide from 5-amino-1-(5-phospho-D-ribosyl)imidazole-4-carboxylate: step 1/2. The protein is Phosphoribosylaminoimidazole-succinocarboxamide synthase of Rickettsia canadensis (strain McKiel).